Here is a 169-residue protein sequence, read N- to C-terminus: Cell division protein B3 (169 aa).

Functionally, part of a cell division machinery. May fulfill a coordination function between the Cdv proteins during cell division. The polypeptide is Cell division protein B3 (Sulfolobus acidocaldarius (strain ATCC 33909 / DSM 639 / JCM 8929 / NBRC 15157 / NCIMB 11770)).